The primary structure comprises 369 residues: Variable large protein 7 (369 aa).

The first 26 residues, 1-26 (MRKRISAIINKLNISIIIMTVVLMIG), serve as a signal peptide directing secretion. Cys-27 carries N-palmitoyl cysteine lipidation. Cys-27 is lipidated: S-diacylglycerol cysteine.

Belongs to the variable large protein (Vlp) family. Alpha subfamily.

The protein resides in the cell outer membrane. The Vlp and Vsp proteins are antigenically distinct proteins, only one vlp or vsp gene is transcriptionally active at any one time. Switching between these genes is a mechanism of host immune response evasion. The polypeptide is Variable large protein 7 (Borrelia hermsii).